The sequence spans 227 residues: Izumo sperm-egg fusion protein 4 (227 aa).

The signal sequence occupies residues 1-24 (MFGQGRLGQAMALLLFLGMTAALA). 2 N-linked (GlcNAc...) asparagine glycosylation sites follow: asparagine 153 and asparagine 214.

It belongs to the Izumo family.

It is found in the secreted. The protein is Izumo sperm-egg fusion protein 4 (Izumo4) of Mus musculus (Mouse).